The chain runs to 393 residues: PxcA-like protein (393 aa).

A run of 4 helical transmembrane segments spans residues 173-193, 271-291, 306-326, and 354-374; these read FLIV…NLVF, IVNL…IIVF, FLAL…DMFV, and VYIF…LLIF.

This sequence belongs to the CemA family. PxcL subfamily.

It localises to the cell inner membrane. In terms of biological role, together with PxcA, contributes to transient H(+) uptake following dark to light transition. Required for H(+) influx to activate the Calvin-Benson-Bassham cycle. May also be involved in CO(2) transport. The sequence is that of PxcA-like protein from Synechocystis sp. (strain ATCC 27184 / PCC 6803 / Kazusa).